Consider the following 150-residue polypeptide: Large ribosomal subunit protein uL11 (150 aa).

The disordered stretch occupies residues 83–111 (AAGLKPQGKRNRAKGSEKPGRQTAGTVTA).

Belongs to the universal ribosomal protein uL11 family. In terms of assembly, part of the ribosomal stalk of the 50S ribosomal subunit. Interacts with L10 and the large rRNA to form the base of the stalk. L10 forms an elongated spine to which L12 dimers bind in a sequential fashion forming a multimeric L10(L12)X complex. One or more lysine residues are methylated.

In terms of biological role, forms part of the ribosomal stalk which helps the ribosome interact with GTP-bound translation factors. This chain is Large ribosomal subunit protein uL11, found in Paracoccus denitrificans (strain Pd 1222).